The sequence spans 350 residues: Biotin synthase 1 (350 aa).

The region spanning 71-296 (EEVEVEGIIS…KTILRFAGGR (226 aa)) is the Radical SAM core domain. [4Fe-4S] cluster-binding residues include cysteine 86, cysteine 90, and cysteine 93. The [2Fe-2S] cluster site is built by cysteine 129, cysteine 221, and arginine 291.

This sequence belongs to the radical SAM superfamily. Biotin synthase family. Homodimer. [4Fe-4S] cluster serves as cofactor. It depends on [2Fe-2S] cluster as a cofactor.

The enzyme catalyses (4R,5S)-dethiobiotin + (sulfur carrier)-SH + 2 reduced [2Fe-2S]-[ferredoxin] + 2 S-adenosyl-L-methionine = (sulfur carrier)-H + biotin + 2 5'-deoxyadenosine + 2 L-methionine + 2 oxidized [2Fe-2S]-[ferredoxin]. It participates in cofactor biosynthesis; biotin biosynthesis; biotin from 7,8-diaminononanoate: step 2/2. Functionally, catalyzes the conversion of dethiobiotin (DTB) to biotin by the insertion of a sulfur atom into dethiobiotin via a radical-based mechanism. The sequence is that of Biotin synthase 1 from Corynebacterium diphtheriae (strain ATCC 700971 / NCTC 13129 / Biotype gravis).